The following is a 224-amino-acid chain: Casparian strip membrane protein 1 (224 aa).

The segment at 1-22 (MSSGEPAAVSIPIHDHHGKAPA) is disordered. At 1–62 (MSSGEPAAVS…RGDHHRGSRC (62 aa)) the chain is on the cytoplasmic side. Residues 63 to 83 (LAFLDFILRIAAFGPALAAAI) traverse the membrane as a helical segment. Over 84–110 (STGTSDETLSVFTEFYQFRARFDDFPA) the chain is Extracellular. A helical membrane pass occupies residues 111 to 131 (FLFFLVANAIVAGYLVLSLPF). Over 132–145 (SAVLVIRPQTIGLR) the chain is Cytoplasmic. The helical transmembrane segment at 146–166 (LLLLVCDMIMAAMLTAAASAA) threads the bilayer. The Extracellular segment spans residues 167–200 (AAIVDLAHNGNLRANWVAICMQFHGFCQRTSGSV). Residues 201–221 (VASFLTVVILMFLVILAACSI) traverse the membrane as a helical segment. Topologically, residues 222–224 (RKR) are cytoplasmic.

Belongs to the Casparian strip membrane proteins (CASP) family. As to quaternary structure, homodimer and heterodimers.

It localises to the cell membrane. Functionally, regulates membrane-cell wall junctions and localized cell wall deposition. Required for establishment of the Casparian strip membrane domain (CSD) and the subsequent formation of Casparian strips, a cell wall modification of the root endodermis that determines an apoplastic barrier between the intraorganismal apoplasm and the extraorganismal apoplasm and prevents lateral diffusion. In Oryza sativa subsp. indica (Rice), this protein is Casparian strip membrane protein 1.